Consider the following 263-residue polypeptide: Fructose-bisphosphate aldolase class 1 (263 aa).

Lys177 functions as the Schiff-base intermediate with dihydroxyacetone-P in the catalytic mechanism.

This sequence belongs to the DeoC/FbaB aldolase family.

It catalyses the reaction beta-D-fructose 1,6-bisphosphate = D-glyceraldehyde 3-phosphate + dihydroxyacetone phosphate. In terms of biological role, has aldolase activity with fructose 1,6-bisphosphate. May play a role in the biosynthesis of aromatic amino acids (AroAA). This chain is Fructose-bisphosphate aldolase class 1 (fba1), found in Halobacterium salinarum (strain ATCC 29341 / DSM 671 / R1).